A 403-amino-acid chain; its full sequence is S-adenosylmethionine synthase (403 aa).

Position 141–146 (141–146 (GQGSVD)) interacts with ATP.

The protein belongs to the AdoMet synthase 2 family. The cofactor is Mg(2+).

It carries out the reaction L-methionine + ATP + H2O = S-adenosyl-L-methionine + phosphate + diphosphate. It participates in amino-acid biosynthesis; S-adenosyl-L-methionine biosynthesis; S-adenosyl-L-methionine from L-methionine: step 1/1. Its function is as follows. Catalyzes the formation of S-adenosylmethionine from methionine and ATP. This is S-adenosylmethionine synthase from Methanococcus aeolicus (strain ATCC BAA-1280 / DSM 17508 / OCM 812 / Nankai-3).